Reading from the N-terminus, the 159-residue chain is Ribosomal RNA large subunit methyltransferase H (159 aa).

S-adenosyl-L-methionine is bound by residues Leu76, Gly108, and 127–132 (FSKMTF).

It belongs to the RNA methyltransferase RlmH family. Homodimer.

The protein resides in the cytoplasm. The catalysed reaction is pseudouridine(1915) in 23S rRNA + S-adenosyl-L-methionine = N(3)-methylpseudouridine(1915) in 23S rRNA + S-adenosyl-L-homocysteine + H(+). Functionally, specifically methylates the pseudouridine at position 1915 (m3Psi1915) in 23S rRNA. The sequence is that of Ribosomal RNA large subunit methyltransferase H from Clostridium botulinum (strain Alaska E43 / Type E3).